The primary structure comprises 437 residues: MNYTTQMDAAKRGIVTKEMEIVAKKECMEISKLMNLVATGQVAIPANKNHKSLSPEGVGQDLKTKINVNLGISKDCYNIDAELEKVKKAVEMKAEAIMDLSCYGKTEEFRRKLIDMSPAMIGTVPMYDAIGFYDKELKDITAEELLAVVEKHAKDGVDFMTIHCGINRETAEVFKRNPRLMNLVSRGGSLLFAWMQLNNKENPFYEHFDKVLDICEKYDVTISLGDACRPGCIEDSTDPSQIKELITLGELTKRAWERNVQIIIEGPGHMSLSEIKTNMLLEKKLCHNAPFYVLGPIVTDVAPGYDHITSAIGGAIAASFGADFLCYVTPAEHLRLPNIDDMKEGIIATKIAAHAADIAKGIPGARDWDNKMSRARRDLDWDTMFELAIDPEKAKRYRAESIPEDEHTCTMCGKMCAVRNMNKVMDGKNINILREDD.

Substrate-binding positions include Asn69, Met98, Tyr127, His163, 185 to 187 (SRG), 226 to 229 (DACR), and Glu265. His269 provides a ligand contact to Zn(2+). A substrate-binding site is contributed by Tyr292. Residue His333 coordinates Zn(2+). Cys409, Cys412, and Cys416 together coordinate [4Fe-4S] cluster.

Belongs to the ThiC family. It depends on [4Fe-4S] cluster as a cofactor.

The enzyme catalyses 5-amino-1-(5-phospho-beta-D-ribosyl)imidazole + S-adenosyl-L-methionine = 4-amino-2-methyl-5-(phosphooxymethyl)pyrimidine + CO + 5'-deoxyadenosine + formate + L-methionine + 3 H(+). Its pathway is cofactor biosynthesis; thiamine diphosphate biosynthesis. In terms of biological role, catalyzes the synthesis of the hydroxymethylpyrimidine phosphate (HMP-P) moiety of thiamine from aminoimidazole ribotide (AIR) in a radical S-adenosyl-L-methionine (SAM)-dependent reaction. This is Phosphomethylpyrimidine synthase from Clostridium novyi (strain NT).